We begin with the raw amino-acid sequence, 1155 residues long: DNA-directed RNA polymerase subunit beta (1155 aa).

The protein belongs to the RNA polymerase beta chain family. The RNAP catalytic core consists of 2 alpha, 1 beta, 1 beta' and 1 omega subunit. When a sigma factor is associated with the core the holoenzyme is formed, which can initiate transcription.

It carries out the reaction RNA(n) + a ribonucleoside 5'-triphosphate = RNA(n+1) + diphosphate. Functionally, DNA-dependent RNA polymerase catalyzes the transcription of DNA into RNA using the four ribonucleoside triphosphates as substrates. In Borrelia turicatae (strain 91E135), this protein is DNA-directed RNA polymerase subunit beta.